The primary structure comprises 189 residues: Chitin synthase 2 (189 aa).

Belongs to the chitin synthase family. Class II subfamily.

The protein resides in the cell membrane. The enzyme catalyses [(1-&gt;4)-N-acetyl-beta-D-glucosaminyl](n) + UDP-N-acetyl-alpha-D-glucosamine = [(1-&gt;4)-N-acetyl-beta-D-glucosaminyl](n+1) + UDP + H(+). Polymerizes chitin, a structural polymer of the cell wall and septum, by transferring the sugar moiety of UDP-GlcNAc to the non-reducing end of the growing chitin polymer. This chain is Chitin synthase 2 (CHS2), found in Exophiala exophialae (Black yeast-like fungus).